The chain runs to 501 residues: Na(+)/H(+) antiporter NhaB (501 aa).

A run of 11 helical transmembrane segments spans residues Val-24–Ala-44, Trp-46–Leu-66, Val-90–Met-110, Phe-145–Val-165, Leu-206–Pro-226, Phe-239–Ala-259, Ala-302–Phe-319, Phe-351–Ile-371, Met-395–Val-415, Val-450–Leu-470, and Met-478–Thr-498.

Belongs to the NhaB Na(+)/H(+) (TC 2.A.34) antiporter family.

The protein resides in the cell inner membrane. It carries out the reaction 2 Na(+)(in) + 3 H(+)(out) = 2 Na(+)(out) + 3 H(+)(in). In terms of biological role, na(+)/H(+) antiporter that extrudes sodium in exchange for external protons. The chain is Na(+)/H(+) antiporter NhaB from Marinobacter nauticus (strain ATCC 700491 / DSM 11845 / VT8) (Marinobacter aquaeolei).